The primary structure comprises 211 residues: ATP phosphoribosyltransferase (211 aa).

It belongs to the ATP phosphoribosyltransferase family. Short subfamily. Heteromultimer composed of HisG and HisZ subunits.

It localises to the cytoplasm. The enzyme catalyses 1-(5-phospho-beta-D-ribosyl)-ATP + diphosphate = 5-phospho-alpha-D-ribose 1-diphosphate + ATP. It functions in the pathway amino-acid biosynthesis; L-histidine biosynthesis; L-histidine from 5-phospho-alpha-D-ribose 1-diphosphate: step 1/9. In terms of biological role, catalyzes the condensation of ATP and 5-phosphoribose 1-diphosphate to form N'-(5'-phosphoribosyl)-ATP (PR-ATP). Has a crucial role in the pathway because the rate of histidine biosynthesis seems to be controlled primarily by regulation of HisG enzymatic activity. The polypeptide is ATP phosphoribosyltransferase (Pseudomonas paraeruginosa (strain DSM 24068 / PA7) (Pseudomonas aeruginosa (strain PA7))).